Here is a 261-residue protein sequence, read N- to C-terminus: Cytochrome c oxidase subunit 3 (261 aa).

Residues 1–15 are Mitochondrial matrix-facing; sequence MTHQTHAYHMVNPSP. A helical transmembrane segment spans residues 16 to 34; the sequence is WPLTGALSALLMTSGLIMW. Residues 35 to 40 are Mitochondrial intermembrane-facing; that stretch reads FHFNST. Residues 41-66 traverse the membrane as a helical segment; that stretch reads TLLMLGLTTNMLTMYQWWRDVVREST. The Mitochondrial matrix segment spans residues 67 to 72; it reads FQGHHT. Residues 73 to 105 traverse the membrane as a helical segment; that stretch reads PNVQKGLRYGMILFIISEVLFFTGFFWAFYHSS. Topologically, residues 106–128 are mitochondrial intermembrane; that stretch reads LAPTPELGGCWPPTGIHPLNPLE. Residues 129–152 traverse the membrane as a helical segment; sequence VPLLNTSVLLASGVSITWAHHSLM. The Mitochondrial matrix portion of the chain corresponds to 153 to 155; the sequence is EGN. Residues 156-183 form a helical membrane-spanning segment; the sequence is RNHMLQALFITIALGVYFTLLQASEYYE. Residues 184–190 lie on the Mitochondrial intermembrane side of the membrane; it reads APFTISD. The chain crosses the membrane as a helical span at residues 191 to 223; that stretch reads GVYGSTFFVATGFHGLHVIIGSTFLIVCFFRQL. Residues 224 to 232 are Mitochondrial matrix-facing; it reads KFHFTSNHH. Residues 233 to 256 traverse the membrane as a helical segment; that stretch reads FGFEAAAWYWHFVDVVWLFLYVSI. Residues 257–261 are Mitochondrial intermembrane-facing; it reads YWWGS.

The protein belongs to the cytochrome c oxidase subunit 3 family. Component of the cytochrome c oxidase (complex IV, CIV), a multisubunit enzyme composed of 14 subunits. The complex is composed of a catalytic core of 3 subunits MT-CO1, MT-CO2 and MT-CO3, encoded in the mitochondrial DNA, and 11 supernumerary subunits COX4I, COX5A, COX5B, COX6A, COX6B, COX6C, COX7A, COX7B, COX7C, COX8 and NDUFA4, which are encoded in the nuclear genome. The complex exists as a monomer or a dimer and forms supercomplexes (SCs) in the inner mitochondrial membrane with NADH-ubiquinone oxidoreductase (complex I, CI) and ubiquinol-cytochrome c oxidoreductase (cytochrome b-c1 complex, complex III, CIII), resulting in different assemblies (supercomplex SCI(1)III(2)IV(1) and megacomplex MCI(2)III(2)IV(2)).

The protein localises to the mitochondrion inner membrane. The enzyme catalyses 4 Fe(II)-[cytochrome c] + O2 + 8 H(+)(in) = 4 Fe(III)-[cytochrome c] + 2 H2O + 4 H(+)(out). In terms of biological role, component of the cytochrome c oxidase, the last enzyme in the mitochondrial electron transport chain which drives oxidative phosphorylation. The respiratory chain contains 3 multisubunit complexes succinate dehydrogenase (complex II, CII), ubiquinol-cytochrome c oxidoreductase (cytochrome b-c1 complex, complex III, CIII) and cytochrome c oxidase (complex IV, CIV), that cooperate to transfer electrons derived from NADH and succinate to molecular oxygen, creating an electrochemical gradient over the inner membrane that drives transmembrane transport and the ATP synthase. Cytochrome c oxidase is the component of the respiratory chain that catalyzes the reduction of oxygen to water. Electrons originating from reduced cytochrome c in the intermembrane space (IMS) are transferred via the dinuclear copper A center (CU(A)) of subunit 2 and heme A of subunit 1 to the active site in subunit 1, a binuclear center (BNC) formed by heme A3 and copper B (CU(B)). The BNC reduces molecular oxygen to 2 water molecules using 4 electrons from cytochrome c in the IMS and 4 protons from the mitochondrial matrix. In Gazella cuvieri (Cuvier's gazelle), this protein is Cytochrome c oxidase subunit 3 (MT-CO3).